A 142-amino-acid polypeptide reads, in one-letter code: Hemoglobin subunit alpha-2 (142 aa).

In terms of domain architecture, Globin spans 2-142; that stretch reads LLTADDKKHI…VSSVLTSKYR (141 aa). H59 is an O2 binding site. Residue H88 participates in heme b binding.

This sequence belongs to the globin family. Heterotetramer of two alpha chains and two beta chains. Red blood cells.

In terms of biological role, involved in oxygen transport from the lung to the various peripheral tissues. The chain is Hemoglobin subunit alpha-2 (hba2) from Xenopus borealis (Kenyan clawed frog).